A 585-amino-acid chain; its full sequence is 3-hydroxy-3-methylglutaryl-coenzyme A reductase 1 (585 aa).

The next 2 helical transmembrane spans lie at 38-58 (LYLT…FLLC) and 77-97 (EIVA…FFGI). A linker region spans residues 98–169 (DFVQSLVLRP…DEMPVTVMTE (72 aa)). The tract at residues 170–585 (EDEEIIRSVV…SSKDVSKVSS (416 aa)) is catalytic. The Charge relay system role is filled by Glu-264. A glycan (N-linked (GlcNAc...) asparagine) is linked at Asn-328. Lys-396 (charge relay system) is an active-site residue. Asn-441 carries an N-linked (GlcNAc...) asparagine glycan. The active-site Charge relay system is Asp-472. The active-site Proton donor is His-570. Asn-574 carries N-linked (GlcNAc...) asparagine glycosylation.

Belongs to the HMG-CoA reductase family.

It is found in the endoplasmic reticulum membrane. The protein localises to the mitochondrion membrane. It localises to the plastid membrane. The enzyme catalyses (R)-mevalonate + 2 NADP(+) + CoA = (3S)-3-hydroxy-3-methylglutaryl-CoA + 2 NADPH + 2 H(+). It participates in metabolic intermediate biosynthesis; (R)-mevalonate biosynthesis; (R)-mevalonate from acetyl-CoA: step 3/3. Its function is as follows. Catalyzes the synthesis of mevalonate. The specific precursor of all isoprenoid compounds present in plants. This Gossypium hirsutum (Upland cotton) protein is 3-hydroxy-3-methylglutaryl-coenzyme A reductase 1 (HMG1).